Reading from the N-terminus, the 535-residue chain is Bifunctional purine biosynthesis protein PurH (535 aa).

The region spanning 6-151 (TRLPVRRALI…KNHKDVAIVV (146 aa)) is the MGS-like domain.

This sequence belongs to the PurH family.

It carries out the reaction (6R)-10-formyltetrahydrofolate + 5-amino-1-(5-phospho-beta-D-ribosyl)imidazole-4-carboxamide = 5-formamido-1-(5-phospho-D-ribosyl)imidazole-4-carboxamide + (6S)-5,6,7,8-tetrahydrofolate. The catalysed reaction is IMP + H2O = 5-formamido-1-(5-phospho-D-ribosyl)imidazole-4-carboxamide. The protein operates within purine metabolism; IMP biosynthesis via de novo pathway; 5-formamido-1-(5-phospho-D-ribosyl)imidazole-4-carboxamide from 5-amino-1-(5-phospho-D-ribosyl)imidazole-4-carboxamide (10-formyl THF route): step 1/1. It participates in purine metabolism; IMP biosynthesis via de novo pathway; IMP from 5-formamido-1-(5-phospho-D-ribosyl)imidazole-4-carboxamide: step 1/1. In Pseudomonas putida (strain ATCC 700007 / DSM 6899 / JCM 31910 / BCRC 17059 / LMG 24140 / F1), this protein is Bifunctional purine biosynthesis protein PurH.